The primary structure comprises 64 residues: Large ribosomal subunit protein uL29 (64 aa).

It belongs to the universal ribosomal protein uL29 family.

In Dichelobacter nodosus (strain VCS1703A), this protein is Large ribosomal subunit protein uL29.